A 157-amino-acid chain; its full sequence is Transcription elongation factor GreA (157 aa).

The protein belongs to the GreA/GreB family.

Its function is as follows. Necessary for efficient RNA polymerase transcription elongation past template-encoded arresting sites. The arresting sites in DNA have the property of trapping a certain fraction of elongating RNA polymerases that pass through, resulting in locked ternary complexes. Cleavage of the nascent transcript by cleavage factors such as GreA or GreB allows the resumption of elongation from the new 3'terminus. GreA releases sequences of 2 to 3 nucleotides. The protein is Transcription elongation factor GreA of Caulobacter vibrioides (strain ATCC 19089 / CIP 103742 / CB 15) (Caulobacter crescentus).